The primary structure comprises 438 residues: Enolase (438 aa).

Residue Q163 coordinates (2R)-2-phosphoglycerate. Catalysis depends on E205, which acts as the Proton donor. Mg(2+)-binding residues include D243, E292, and D319. Residues K344, R373, S374, and K395 each contribute to the (2R)-2-phosphoglycerate site. K344 acts as the Proton acceptor in catalysis.

The protein belongs to the enolase family. The cofactor is Mg(2+).

The protein resides in the cytoplasm. It is found in the secreted. The protein localises to the cell surface. It catalyses the reaction (2R)-2-phosphoglycerate = phosphoenolpyruvate + H2O. The protein operates within carbohydrate degradation; glycolysis; pyruvate from D-glyceraldehyde 3-phosphate: step 4/5. Functionally, catalyzes the reversible conversion of 2-phosphoglycerate (2-PG) into phosphoenolpyruvate (PEP). It is essential for the degradation of carbohydrates via glycolysis. This is Enolase from Streptococcus agalactiae.